The following is a 390-amino-acid chain: F-box/kelch-repeat protein At3g04660 (390 aa).

The region spanning 18–67 (YDPSSILPLELKIEILMKSPPKSIAKLGFVSNHWSSIIRGQVFTDLYMRR) is the F-box domain. 2 Kelch repeats span residues 115 to 161 (FSPP…FGYD) and 272 to 323 (MVDH…DQRV).

In terms of assembly, part of a SCF (ASK-cullin-F-box) protein ligase complex. Interacts with SKP1A/ASK1, SKP1B/ASK2, ASK11 and ASK13.

The protein localises to the nucleus. The protein operates within protein modification; protein ubiquitination. Its function is as follows. Component of SCF(ASK-cullin-F-box) E3 ubiquitin ligase complexes, which may mediate the ubiquitination and subsequent proteasomal degradation of target proteins. This Arabidopsis thaliana (Mouse-ear cress) protein is F-box/kelch-repeat protein At3g04660.